Consider the following 310-residue polypeptide: GTP-binding protein GTR1 (310 aa).

The GTP site is built by Ser-15, Gly-18, Lys-19, Ser-20, Ser-21, Thr-35, Thr-41, Gly-64, His-126, Asp-129, and Ile-166.

Belongs to the GTR/RAG GTP-binding protein family. As to quaternary structure, heterodimer; with GTR2. Component of the GSE complex composed of GTR1, GTR2, SLM4, MEH1 and LTV1. Interacts with GTR2; the interaction is direct. Interacts with TOR1.

The protein localises to the vacuole membrane. The enzyme catalyses GTP + H2O = GDP + phosphate + H(+). In terms of biological role, GTPase involved in activation of the TORC1 signaling pathway, which promotes growth and represses autophagy in nutrient-rich conditions. Also required for TORC1 inactivation during nitrogen starvation. Required for intracellular sorting of GAP1 out of the endosome. Functionally associated with the inorganic phosphate transporter PHO84, and may be involved in regulating its function or localization. The protein is GTP-binding protein GTR1 (GTR1) of Saccharomyces cerevisiae (strain ATCC 204508 / S288c) (Baker's yeast).